An 837-amino-acid polypeptide reads, in one-letter code: Probable aldehyde oxidase 4 (837 aa).

The 90-residue stretch at 9-98 (ERVVFELNGE…FCSIITTEGL (90 aa)) folds into the 2Fe-2S ferredoxin-type domain. Residues Cys50, Cys55, Cys58, and Cys80 each contribute to the [2Fe-2S] cluster site. The 188-residue stretch at 240-427 (ISGPREGWYC…LSIFIPHWAS (188 aa)) folds into the FAD-binding PCMH-type domain.

The protein belongs to the xanthine dehydrogenase family. As to quaternary structure, aldehyde oxidases (AO) are homodimers and heterodimers of AO subunits. The cofactor is [2Fe-2S] cluster. Requires FAD as cofactor. Mo-molybdopterin serves as cofactor.

It carries out the reaction an aldehyde + O2 + H2O = a carboxylate + H2O2 + H(+). In Oryza sativa subsp. japonica (Rice), this protein is Probable aldehyde oxidase 4.